The chain runs to 254 residues: 5'/3'-nucleotidase SurE (254 aa).

A divalent metal cation contacts are provided by Asp9, Asp10, Ser40, and Asn93.

Belongs to the SurE nucleotidase family. The cofactor is a divalent metal cation.

Its subcellular location is the cytoplasm. The enzyme catalyses a ribonucleoside 5'-phosphate + H2O = a ribonucleoside + phosphate. It carries out the reaction a ribonucleoside 3'-phosphate + H2O = a ribonucleoside + phosphate. It catalyses the reaction [phosphate](n) + H2O = [phosphate](n-1) + phosphate + H(+). Nucleotidase with a broad substrate specificity as it can dephosphorylate various ribo- and deoxyribonucleoside 5'-monophosphates and ribonucleoside 3'-monophosphates with highest affinity to 3'-AMP. Also hydrolyzes polyphosphate (exopolyphosphatase activity) with the preference for short-chain-length substrates (P20-25). Might be involved in the regulation of dNTP and NTP pools, and in the turnover of 3'-mononucleotides produced by numerous intracellular RNases (T1, T2, and F) during the degradation of various RNAs. This chain is 5'/3'-nucleotidase SurE, found in Yersinia pseudotuberculosis serotype O:1b (strain IP 31758).